We begin with the raw amino-acid sequence, 200 residues long: Probable molybdenum cofactor guanylyltransferase (200 aa).

GTP-binding positions include 9–11 (LAG), lysine 21, aspartate 69, and aspartate 100. Aspartate 100 is a Mg(2+) binding site.

The protein belongs to the MobA family. The cofactor is Mg(2+).

The protein localises to the cytoplasm. It carries out the reaction Mo-molybdopterin + GTP + H(+) = Mo-molybdopterin guanine dinucleotide + diphosphate. Functionally, transfers a GMP moiety from GTP to Mo-molybdopterin (Mo-MPT) cofactor (Moco or molybdenum cofactor) to form Mo-molybdopterin guanine dinucleotide (Mo-MGD) cofactor. This chain is Probable molybdenum cofactor guanylyltransferase, found in Bacillus thuringiensis (strain Al Hakam).